A 141-amino-acid chain; its full sequence is Large ribosomal subunit protein uL11 (141 aa).

It belongs to the universal ribosomal protein uL11 family. As to quaternary structure, part of the ribosomal stalk of the 50S ribosomal subunit. Interacts with L10 and the large rRNA to form the base of the stalk. L10 forms an elongated spine to which L12 dimers bind in a sequential fashion forming a multimeric L10(L12)X complex. Post-translationally, one or more lysine residues are methylated.

In terms of biological role, forms part of the ribosomal stalk which helps the ribosome interact with GTP-bound translation factors. This is Large ribosomal subunit protein uL11 from Thermomicrobium roseum (strain ATCC 27502 / DSM 5159 / P-2).